The following is a 179-amino-acid chain: Large ribosomal subunit protein uL6 (179 aa).

It belongs to the universal ribosomal protein uL6 family. In terms of assembly, part of the 50S ribosomal subunit.

In terms of biological role, this protein binds to the 23S rRNA, and is important in its secondary structure. It is located near the subunit interface in the base of the L7/L12 stalk, and near the tRNA binding site of the peptidyltransferase center. The polypeptide is Large ribosomal subunit protein uL6 (Mycolicibacterium gilvum (strain PYR-GCK) (Mycobacterium gilvum (strain PYR-GCK))).